We begin with the raw amino-acid sequence, 365 residues long: Alanine racemase (365 aa).

Lys-32 acts as the Proton acceptor; specific for D-alanine in catalysis. Lys-32 is modified (N6-(pyridoxal phosphate)lysine). Arg-128 contributes to the substrate binding site. Catalysis depends on Tyr-257, which acts as the Proton acceptor; specific for L-alanine. Substrate is bound at residue Met-305.

This sequence belongs to the alanine racemase family. Pyridoxal 5'-phosphate serves as cofactor.

It carries out the reaction L-alanine = D-alanine. It functions in the pathway amino-acid biosynthesis; D-alanine biosynthesis; D-alanine from L-alanine: step 1/1. Catalyzes the interconversion of L-alanine and D-alanine. May also act on other amino acids. The chain is Alanine racemase (alr) from Francisella tularensis subsp. novicida (strain U112).